Reading from the N-terminus, the 2055-residue chain is Citron Rho-interacting kinase (2055 aa).

Met1 is subject to N-acetylmethionine. One can recognise a Protein kinase domain in the interval 97-359; the sequence is FEVRSLVGCG…FEGLCCHPFF (263 aa). Residues 103–111 and Lys126 each bind ATP; that span reads VGCGHFAEV. The active-site Proton acceptor is the Asp221. Residues 360-430 form the AGC-kinase C-terminal domain; the sequence is ARTDWNNIRN…SKALGYLGRS (71 aa). 4 positions are modified to phosphoserine: Ser432, Ser439, Ser479, and Ser581. Coiled coils occupy residues 441 to 1086, 1091 to 1247, and 1275 to 1325; these read AKVS…QWEA, LGDE…VLYS, and AKKK…RKAT. Positions 1132–1328 are interaction with Rho/Rac; that stretch reads LAVKEHKAEI…AAHRKATDHP (197 aa). Phosphotyrosine is present on Tyr1237. Over residues 1316–1329 the composition is skewed to basic and acidic residues; sequence REEAAHRKATDHPH. Disordered regions lie at residues 1316-1336 and 1348-1377; these read REEA…PATA and SPEH…EFSR. Over residues 1353–1363 the composition is skewed to low complexity; it reads PSAMSLLAPPS. Residues 1365-1377 are compositionally biased toward basic and acidic residues; the sequence is RRKESSTPEEFSR. A Phorbol-ester/DAG-type zinc finger spans residues 1388–1437; the sequence is PHRFNVGLNMRATKCAVCLDTVHFGRQASKCLECQVMCHPKCSTCLPATC. Residues 1469-1589 enclose the PH domain; sequence SLHLEGWMKV…WVTALESVVA (121 aa). A CNH domain is found at 1617 to 1907; the sequence is RLDMNCTLPF…RYLGPAISSG (291 aa). Lys1747 carries the post-translational modification N6-acetyllysine. Residues 1932–2040 form a disordered region; sequence SGTEQHRVPS…RGRLPAGAVR (109 aa). Polar residues predominate over residues 1939 to 1948; sequence VPSTSRSSPN. Ser1966 carries the phosphoserine modification. The span at 1974–2031 shows a compositional bias: basic and acidic residues; that stretch reads SHPREPSTPHRYRDREGRTELRRDKSPGRPLEREKSPGRMLSTRRERSPGRLFEDSSR. The short motif at 1979-1984 is the SH3-binding element; the sequence is PSTPHR. Ser2021 is subject to Phosphoserine. Thr2041 carries the phosphothreonine modification.

This sequence belongs to the protein kinase superfamily. AGC Ser/Thr protein kinase family. As to quaternary structure, interacts with TTC3. Homodimer. Directly interacts with KIF14 depending on the activation state (stronger interaction with the kinase-dead form). A major signal was observed in testis and brain, but it was also detected in thymus, spleen, kidney, heart and lung.

The protein localises to the cytoplasm. The catalysed reaction is L-seryl-[protein] + ATP = O-phospho-L-seryl-[protein] + ADP + H(+). The enzyme catalyses L-threonyl-[protein] + ATP = O-phospho-L-threonyl-[protein] + ADP + H(+). Functionally, plays a role in cytokinesis. Required for KIF14 localization to the central spindle and midbody. Probable RHO/RAC effector that binds to the GTP-bound forms of RHO and RAC1. It probably binds p21 with a tighter specificity in vivo. Displays serine/threonine protein kinase activity. Plays an important role in the regulation of cytokinesis and the development of the central nervous system. Phosphorylates MYL9/MLC2. The chain is Citron Rho-interacting kinase (Cit) from Mus musculus (Mouse).